The chain runs to 84 residues: Small ribosomal subunit protein bS18 (84 aa).

This sequence belongs to the bacterial ribosomal protein bS18 family. As to quaternary structure, part of the 30S ribosomal subunit. Forms a tight heterodimer with protein bS6.

Functionally, binds as a heterodimer with protein bS6 to the central domain of the 16S rRNA, where it helps stabilize the platform of the 30S subunit. The protein is Small ribosomal subunit protein bS18 of Clostridium kluyveri (strain NBRC 12016).